Here is a 437-residue protein sequence, read N- to C-terminus: Tol-Pal system protein TolB (437 aa).

The N-terminal stretch at 1-23 (MQKRHPIIYLLITLLIFVPVSYG) is a signal peptide.

This sequence belongs to the TolB family. In terms of assembly, the Tol-Pal system is composed of five core proteins: the inner membrane proteins TolA, TolQ and TolR, the periplasmic protein TolB and the outer membrane protein Pal. They form a network linking the inner and outer membranes and the peptidoglycan layer.

Its subcellular location is the periplasm. In terms of biological role, part of the Tol-Pal system, which plays a role in outer membrane invagination during cell division and is important for maintaining outer membrane integrity. This Coxiella burnetii (strain RSA 493 / Nine Mile phase I) protein is Tol-Pal system protein TolB.